The following is a 654-amino-acid chain: Meiotically up-regulated gene 24 protein (654 aa).

The region spanning 299–355 (RNVFIGNLPSSYHEKEIEEAFGKFGKIEHIKILSKKNIAFVHFLNIRDAIKVVRTLS) is the RRM 1 domain. The tract at residues 383–404 (SCFTSKQNPDTTSDRCRQQESK) is disordered. Polar residues predominate over residues 384 to 393 (CFTSKQNPDT). The span at 394–404 (TSDRCRQQESK) shows a compositional bias: basic and acidic residues. RRM domains lie at 409-482 (RTVF…WGKE) and 500-571 (RNVY…YAPD).

The protein localises to the cytoplasm. Functionally, has a role in meiosis. This chain is Meiotically up-regulated gene 24 protein (mug24), found in Schizosaccharomyces pombe (strain 972 / ATCC 24843) (Fission yeast).